Reading from the N-terminus, the 133-residue chain is Ribosome-binding factor A (133 aa).

The protein belongs to the RbfA family. Monomer. Binds 30S ribosomal subunits, but not 50S ribosomal subunits or 70S ribosomes.

It localises to the cytoplasm. One of several proteins that assist in the late maturation steps of the functional core of the 30S ribosomal subunit. Associates with free 30S ribosomal subunits (but not with 30S subunits that are part of 70S ribosomes or polysomes). Required for efficient processing of 16S rRNA. May interact with the 5'-terminal helix region of 16S rRNA. In Salmonella typhi, this protein is Ribosome-binding factor A.